The sequence spans 374 residues: tRNA-specific 2-thiouridylase MnmA (374 aa).

Residues 12–19 (GMSGGVDS) and M38 each bind ATP. Positions 98–100 (NPD) are interaction with target base in tRNA. The active-site Nucleophile is the C103. C103 and C200 are joined by a disulfide. Position 127 (G127) interacts with ATP. The interaction with tRNA stretch occupies residues 150–152 (KDQ). The Cysteine persulfide intermediate role is filled by C200. The interaction with tRNA stretch occupies residues 311–312 (RY).

Belongs to the MnmA/TRMU family.

It is found in the cytoplasm. It carries out the reaction S-sulfanyl-L-cysteinyl-[protein] + uridine(34) in tRNA + AH2 + ATP = 2-thiouridine(34) in tRNA + L-cysteinyl-[protein] + A + AMP + diphosphate + H(+). Catalyzes the 2-thiolation of uridine at the wobble position (U34) of tRNA, leading to the formation of s(2)U34. This Enterococcus faecalis (strain ATCC 700802 / V583) protein is tRNA-specific 2-thiouridylase MnmA.